We begin with the raw amino-acid sequence, 357 residues long: Alanine racemase (357 aa).

The active-site Proton acceptor; specific for D-alanine is the K33. Residue K33 is modified to N6-(pyridoxal phosphate)lysine. Substrate is bound at residue R129. The Proton acceptor; specific for L-alanine role is filled by Y253. Residue M301 participates in substrate binding.

This sequence belongs to the alanine racemase family. Pyridoxal 5'-phosphate is required as a cofactor.

It catalyses the reaction L-alanine = D-alanine. It functions in the pathway amino-acid biosynthesis; D-alanine biosynthesis; D-alanine from L-alanine: step 1/1. Catalyzes the interconversion of L-alanine and D-alanine. May also act on other amino acids. This is Alanine racemase (alr) from Pseudomonas entomophila (strain L48).